Here is a 113-residue protein sequence, read N- to C-terminus: Large ribosomal subunit protein uL22 (113 aa).

Belongs to the universal ribosomal protein uL22 family. Part of the 50S ribosomal subunit.

Its function is as follows. This protein binds specifically to 23S rRNA; its binding is stimulated by other ribosomal proteins, e.g. L4, L17, and L20. It is important during the early stages of 50S assembly. It makes multiple contacts with different domains of the 23S rRNA in the assembled 50S subunit and ribosome. The globular domain of the protein is located near the polypeptide exit tunnel on the outside of the subunit, while an extended beta-hairpin is found that lines the wall of the exit tunnel in the center of the 70S ribosome. This chain is Large ribosomal subunit protein uL22, found in Herpetosiphon aurantiacus (strain ATCC 23779 / DSM 785 / 114-95).